Here is a 205-residue protein sequence, read N- to C-terminus: Guanylate kinase (205 aa).

One can recognise a Guanylate kinase-like domain in the interval glycine 7–asparagine 185. Alanine 14–threonine 21 is an ATP binding site.

The protein belongs to the guanylate kinase family.

Its subcellular location is the cytoplasm. It catalyses the reaction GMP + ATP = GDP + ADP. In terms of biological role, essential for recycling GMP and indirectly, cGMP. The sequence is that of Guanylate kinase from Neisseria gonorrhoeae (strain ATCC 700825 / FA 1090).